The following is a 121-amino-acid chain: MYIYWILLGLAVATEITGTLSMKWASVSEGNGGFILMLVMISLSYIFLSFAVKKIALGVAYALWEGIGILFITLFSVLLFDESLSLMKIAGLTTLVAGIVLIKSGTRKARKPELEVNHGAV.

A topological domain (cytoplasmic) is located at residue M1. Residues Y2–M22 traverse the membrane as a helical segment. The Periplasmic segment spans residues K23–N31. A helical transmembrane segment spans residues G32–V52. Residues K53–K54 lie on the Cytoplasmic side of the membrane. The chain crosses the membrane as a helical span at residues I55–F75. Over S76 to D81 the chain is Periplasmic. The helical transmembrane segment at E82 to I102 threads the bilayer. Residues K103–V121 are Cytoplasmic-facing.

This sequence belongs to the drug/metabolite transporter (DMT) superfamily. Small multidrug resistance (SMR) (TC 2.A.7.1) family. MdtJ subfamily. In terms of assembly, forms a complex with MdtI.

It localises to the cell inner membrane. Its function is as follows. Catalyzes the excretion of spermidine. In Escherichia coli O6:H1 (strain CFT073 / ATCC 700928 / UPEC), this protein is Spermidine export protein MdtJ (mdtJ).